We begin with the raw amino-acid sequence, 195 residues long: MGSRASTLLRDEELEEIKKETGFSHSQITRLYSRFTSLDKGENGTLSREDFQRIPELAINPLGDRIINAFFPEGEDQVNFRGFMRTLAHFRPIEDNEKSKDVNGPEPLNSRSNKLHFAFRLYDLDKDEKISRDELLQVLRMMVGVNISDEQLGSIADRTIQEADQDGDSAISFTEFVKVLEKVDVEQKMSIRFLH.

Gly-2 carries the N-myristoyl glycine lipid modification. The Necessary for association with microtubule and interaction with GAPDH signature appears at 2 to 6 (GSRAS). EF-hand domains follow at residues 26–61 (SQIT…AINP), 66–101 (IINA…KSKD), 110–145 (SRSN…MVGV), and 151–186 (QLGS…VDVE). Ca(2+)-binding residues include Asp-123, Asp-125, Asp-127, Lys-129, and Glu-134. The short motif at 138 to 147 (VLRMMVGVNI) is the Nuclear export signal 1 element. A necessary for nuclear export signal region spans residues 143-185 (VGVNISDEQLGSIADRTIQEADQDGDSAISFTEFVKVLEKVDV). Residues Asp-164, Asp-166, Asp-168, and Glu-175 each coordinate Ca(2+). Positions 176 to 185 (FVKVLEKVDV) match the Nuclear export signal 2 motif.

This sequence belongs to the calcineurin regulatory subunit family. CHP subfamily. As to quaternary structure, monomer. Interacts with STK17B; the interaction occurs in a calcium-independent manner and induces the translocation of CHP1 from the Golgi to the nucleus. Interacts with GAPDH; the interaction is direct, occurs in a N-myristoylation-dependent manner and facilitates the ability of CHP1 to bind microtubules. Interacts with KIF1B (via the C-terminal end of the kinesin-motor domain); the interaction occurs in a calcium-dependent manner. Associates (via C-terminal domain) with microtubules; the association occurs with polymerized microtubules during the cell cycle in a myristoylation- and calcium-independent manner and is enhanced by GAPDH. Interacts with PPP3CA. Interacts with SLC9A1/NHE1 (via the C-terminal domain); the interaction occurs at the plasma membrane in a calcium-dependent manner and at a domain that is critical for growth factor stimulation of the exchanger. Interacts with SLC9A3; increases SLC9A3 trafficking and activity at the plasma membrane. Post-translationally, phosphorylated; decreased phosphorylation is associated with an increase in SLC9A1/NHE1 Na(+)/H(+) exchange activity. Phosphorylation occurs in serum-dependent manner. The phosphorylation state may regulate the binding to SLC9A1/NHE1. In terms of processing, both N-myristoylation and calcium-mediated conformational changes are essential for its function in exocytic traffic. N-myristoylation is required for its association with microtubules and interaction with GAPDH, but not for the constitutive association to membranes. In terms of tissue distribution, ubiquitously expressed. Has been found in fetal eye, lung, liver, muscle, heart, kidney, thymus and spleen.

It is found in the nucleus. The protein resides in the cytoplasm. The protein localises to the cytoskeleton. It localises to the endomembrane system. Its subcellular location is the endoplasmic reticulum-Golgi intermediate compartment. It is found in the endoplasmic reticulum. The protein resides in the cell membrane. The protein localises to the membrane. Calcium-binding protein involved in different processes such as regulation of vesicular trafficking, plasma membrane Na(+)/H(+) exchanger and gene transcription. Involved in the constitutive exocytic membrane traffic. Mediates the association between microtubules and membrane-bound organelles of the endoplasmic reticulum and Golgi apparatus and is also required for the targeting and fusion of transcytotic vesicles (TCV) with the plasma membrane. Functions as an integral cofactor in cell pH regulation by controlling plasma membrane-type Na(+)/H(+) exchange activity. Affects the pH sensitivity of SLC9A1/NHE1 by increasing its sensitivity at acidic pH. Required for the stabilization and localization of SLC9A1/NHE1 at the plasma membrane. Inhibits serum- and GTPase-stimulated Na(+)/H(+) exchange. Plays a role as an inhibitor of ribosomal RNA transcription by repressing the nucleolar UBF1 transcriptional activity. May sequester UBF1 in the nucleoplasm and limit its translocation to the nucleolus. Associates to the ribosomal gene promoter. Acts as a negative regulator of the calcineurin/NFAT signaling pathway. Inhibits NFAT nuclear translocation and transcriptional activity by suppressing the calcium-dependent calcineurin phosphatase activity. Also negatively regulates the kinase activity of the apoptosis-induced kinase STK17B. Inhibits both STK17B auto- and substrate-phosphorylations in a calcium-dependent manner. This is Calcineurin B homologous protein 1 (CHP1) from Homo sapiens (Human).